Here is a 167-residue protein sequence, read N- to C-terminus: NAD(P)H-quinone oxidoreductase subunit I, chloroplastic (167 aa).

4Fe-4S ferredoxin-type domains are found at residues 55–84 (GRIH…VDWK) and 95–124 (LNYS…MTEE). Cys-64, Cys-67, Cys-70, Cys-74, Cys-104, Cys-107, Cys-110, and Cys-114 together coordinate [4Fe-4S] cluster.

This sequence belongs to the complex I 23 kDa subunit family. In terms of assembly, NDH is composed of at least 16 different subunits, 5 of which are encoded in the nucleus. Requires [4Fe-4S] cluster as cofactor.

The protein localises to the plastid. The protein resides in the chloroplast thylakoid membrane. The enzyme catalyses a plastoquinone + NADH + (n+1) H(+)(in) = a plastoquinol + NAD(+) + n H(+)(out). The catalysed reaction is a plastoquinone + NADPH + (n+1) H(+)(in) = a plastoquinol + NADP(+) + n H(+)(out). Functionally, NDH shuttles electrons from NAD(P)H:plastoquinone, via FMN and iron-sulfur (Fe-S) centers, to quinones in the photosynthetic chain and possibly in a chloroplast respiratory chain. The immediate electron acceptor for the enzyme in this species is believed to be plastoquinone. Couples the redox reaction to proton translocation, and thus conserves the redox energy in a proton gradient. The polypeptide is NAD(P)H-quinone oxidoreductase subunit I, chloroplastic (Aethionema cordifolium (Lebanon stonecress)).